The chain runs to 232 residues: Transcriptional regulatory protein CpxR (232 aa).

Positions 3–115 (KILLVDDDRE…ELVARIRAIL (113 aa)) constitute a Response regulatory domain. 4-aspartylphosphate is present on Asp-51. Residues 131 to 230 (SPTLEVDALV…LRGRGYLMVS (100 aa)) constitute a DNA-binding region (ompR/PhoB-type).

In terms of processing, phosphorylated by CpxA.

The protein resides in the cytoplasm. In terms of biological role, member of the two-component regulatory system CpxA/CpxR. This system combats a variety of extracytoplasmic protein-mediated toxicities. It performs this function by increasing the synthesis of the periplasmic protease, DegP as well as that of CpxP protein. The chain is Transcriptional regulatory protein CpxR (cpxR) from Escherichia coli O157:H7.